Reading from the N-terminus, the 923-residue chain is Hexokinase-3 (923 aa).

A compositionally biased stretch (polar residues) spans 1–18 (MDSIGSSGLRQGEETLSC). Residues 1–30 (MDSIGSSGLRQGEETLSCSEEGLPGPSDSS) are disordered. 2 Hexokinase domains span residues 27-471 (SDSS…MVTA) and 477-912 (AAHR…LVTA). The tract at residues 84-220 (HGTEQGDFVV…AYNIDVVAVV (137 aa)) is hexokinase small subdomain 1. 95–102 (ELGATGAS) is an ATP binding site. Position 95–104 (95–104 (ELGATGASLR)) interacts with D-glucose 6-phosphate. D-glucose is bound by residues Ser168, 185–186 (TK), and 221–222 (ND). The segment at 221–460 (NDTVGTMMGC…CDVSLIPSVD (240 aa)) is hexokinase large subdomain 1. 2 residues coordinate D-glucose 6-phosphate: Asp222 and Thr245. D-glucose is bound by residues Asn248, Glu273, and 304 to 307 (QRFE). 426-428 (GGR) is a binding site for D-glucose 6-phosphate. ATP is bound by residues 438–439 (SV) and 542–547 (DLGGTN). Positions 531–661 (DGSERGDFLA…AVELNVVAIV (131 aa)) are hexokinase small subdomain 2. Residue 542–546 (DLGGT) participates in D-glucose 6-phosphate binding. D-glucose-binding positions include 609–610 (SF), 626–627 (TK), and 662–663 (ND). Residues 662 to 901 (NDTVGTMMSC…CVVTFLQSED (240 aa)) form a hexokinase large subdomain 2 region. Residues Asp663 and Thr686 each contribute to the D-glucose 6-phosphate site. Thr686 contributes to the ATP binding site. Residues 688–689 (TN), Glu714, and Glu748 each bind D-glucose. ATP-binding positions include 753 to 754 (GM), 790 to 794 (TKFLS), and 869 to 873 (TLYKL). D-glucose 6-phosphate is bound by residues 867–869 (DGT) and Ser903.

Belongs to the hexokinase family.

The enzyme catalyses a D-hexose + ATP = a D-hexose 6-phosphate + ADP + H(+). It carries out the reaction D-fructose + ATP = D-fructose 6-phosphate + ADP + H(+). It catalyses the reaction D-glucose + ATP = D-glucose 6-phosphate + ADP + H(+). It functions in the pathway carbohydrate metabolism; hexose metabolism. Its pathway is carbohydrate degradation; glycolysis; D-glyceraldehyde 3-phosphate and glycerone phosphate from D-glucose: step 1/4. Its activity is regulated as follows. Hexokinase is an allosteric enzyme inhibited by its product D-glucose 6-phosphate. Functionally, catalyzes the phosphorylation of hexose, such as D-glucose and D-fructose, to hexose 6-phosphate (D-glucose 6-phosphate and D-fructose 6-phosphate, respectively). Mediates the initial step of glycolysis by catalyzing phosphorylation of D-glucose to D-glucose 6-phosphate. The sequence is that of Hexokinase-3 from Homo sapiens (Human).